The chain runs to 235 residues: Eukaryotic translation initiation factor 4E-1 (235 aa).

The disordered stretch occupies residues 1–52 (MVVEDSMKATSAEDLSNSIANQNPRGRGGDEDEELEEGEIVGDDDLDSSNLS). The segment covering 13–24 (EDLSNSIANQNP) has biased composition (polar residues). Positions 30–47 (DEDEELEEGEIVGDDDLD) are enriched in acidic residues. 2 EIF4G-binding regions span residues 60-63 (HPLE) and 70-106 (FDNP…NNIH). Residues 78 to 83 (KQATWG), Lys-110, and 128 to 129 (WE) contribute to the mRNA site. Cys-133 and Cys-171 are joined by a disulfide. An EIF4G-binding region spans residues 154–163 (YTLLAMIGEQ). MRNA-binding positions include 178–183 (RSGQDK) and 223–227 (KKFDR).

It belongs to the eukaryotic initiation factor 4E family. In terms of assembly, EIF4F is a multi-subunit complex, the composition of which varies with external and internal environmental conditions. It is composed of at least EIF4A, EIF4E and EIF4G. EIF4E is also known to interact with other partners. Interacts directly with eIF4G. In higher plants two isoforms of EIF4F have been identified, named isoform EIF4F and isoform EIF(iso)4F. Isoform EIF4F has subunits p220 and p26, whereas isoform EIF(iso)4F has subunits p82 and p28. (Microbial infection) Interacts with potyvirus viral genome-linked protein (VPg); this interaction is possible in susceptible hosts but impaired in resistant plants. Post-translationally, according to the redox status, the Cys-133-Cys-171 disulfide bridge may have a role in regulating protein function by affecting its ability to bind capped mRNA.

It localises to the nucleus. Its subcellular location is the cytoplasm. In terms of biological role, component of the protein complex eIF4F, which is involved in the recognition of the mRNA cap, ATP-dependent unwinding of 5'-terminal secondary structure and recruitment of mRNA to the ribosome. Recognizes and binds the 7-methylguanosine-containing mRNA cap during an early step in the initiation of protein synthesis and facilitates ribosome binding by inducing the unwinding of the mRNAs secondary structures. Key component of recessive resistance to potyviruses and Tombusviridae genus Carmovirus such as melon necrotic spot virus (MNSV). Its function is as follows. (Microbial infection) Susceptibility host factor required for viral infection by recruiting viral RNAs, including uncapped and non-polyadenylated RNA, to the host ribosomal complex via an interaction with viral genome-linked protein (VPg). This Cucumis melo (Muskmelon) protein is Eukaryotic translation initiation factor 4E-1.